The chain runs to 249 residues: tRNA (guanine-N(1)-)-methyltransferase (249 aa).

S-adenosyl-L-methionine contacts are provided by residues Gly-113 and 133-138; that span reads IGDFVL.

This sequence belongs to the RNA methyltransferase TrmD family. Homodimer.

It is found in the cytoplasm. It catalyses the reaction guanosine(37) in tRNA + S-adenosyl-L-methionine = N(1)-methylguanosine(37) in tRNA + S-adenosyl-L-homocysteine + H(+). Its function is as follows. Specifically methylates guanosine-37 in various tRNAs. This Aliivibrio salmonicida (strain LFI1238) (Vibrio salmonicida (strain LFI1238)) protein is tRNA (guanine-N(1)-)-methyltransferase.